Consider the following 412-residue polypeptide: 1-deoxy-D-xylulose 5-phosphate reductoisomerase (412 aa).

Residues Thr-5, Gly-6, Ser-7, Ile-8, Gly-31, Asn-33, and Asn-125 each coordinate NADPH. Lys-126 is a binding site for 1-deoxy-D-xylulose 5-phosphate. Glu-127 provides a ligand contact to NADPH. Asp-151 provides a ligand contact to Mn(2+). Ser-152, Glu-153, Ser-189, and His-212 together coordinate 1-deoxy-D-xylulose 5-phosphate. Position 153 (Glu-153) interacts with Mn(2+). Gly-218 is a binding site for NADPH. Residues Ser-225, Asn-230, Lys-231, and Glu-234 each contribute to the 1-deoxy-D-xylulose 5-phosphate site. Position 234 (Glu-234) interacts with Mn(2+).

This sequence belongs to the DXR family. It depends on Mg(2+) as a cofactor. The cofactor is Mn(2+).

The catalysed reaction is 2-C-methyl-D-erythritol 4-phosphate + NADP(+) = 1-deoxy-D-xylulose 5-phosphate + NADPH + H(+). Its pathway is isoprenoid biosynthesis; isopentenyl diphosphate biosynthesis via DXP pathway; isopentenyl diphosphate from 1-deoxy-D-xylulose 5-phosphate: step 1/6. In terms of biological role, catalyzes the NADPH-dependent rearrangement and reduction of 1-deoxy-D-xylulose-5-phosphate (DXP) to 2-C-methyl-D-erythritol 4-phosphate (MEP). The sequence is that of 1-deoxy-D-xylulose 5-phosphate reductoisomerase from Prochlorococcus marinus (strain MIT 9313).